Here is a 423-residue protein sequence, read N- to C-terminus: uncharacterized protein (423 aa).

Positions 181, 183, and 184 each coordinate Mg(2+). Residue Lys181 is modified to N6-carboxylysine.

This sequence belongs to the RuBisCO large chain family. Type IV subfamily. Requires Mg(2+) as cofactor.

Its function is as follows. May be involved in sulfur metabolism and oxidative stress response. Does not show RuBisCO activity. This is an uncharacterized protein from Bordetella bronchiseptica (strain ATCC BAA-588 / NCTC 13252 / RB50) (Alcaligenes bronchisepticus).